A 485-amino-acid polypeptide reads, in one-letter code: NADH-quinone oxidoreductase subunit N (485 aa).

14 helical membrane passes run 8–28 (LIAL…MLCI), 35–55 (FINS…LWFV), 75–95 (FYTG…YAWL), 105–125 (FYLL…ANHL), 127–147 (ALFL…GYAF), 159–179 (YTLL…LVYA), 203–223 (LLAG…LVPF), 235–255 (PVPV…AVVM), 271–291 (LVLA…ALSQ), 303–323 (IAHL…TLAL), 326–346 (VGVY…VVSL), 371–393 (LLSS…LGFI), 406–426 (HLGW…FYYL), and 449–469 (ALTA…LLGL).

The protein belongs to the complex I subunit 2 family. In terms of assembly, NDH-1 is composed of 13 different subunits. Subunits NuoA, H, J, K, L, M, N constitute the membrane sector of the complex.

It localises to the cell inner membrane. It carries out the reaction a quinone + NADH + 5 H(+)(in) = a quinol + NAD(+) + 4 H(+)(out). NDH-1 shuttles electrons from NADH, via FMN and iron-sulfur (Fe-S) centers, to quinones in the respiratory chain. The immediate electron acceptor for the enzyme in this species is believed to be ubiquinone. Couples the redox reaction to proton translocation (for every two electrons transferred, four hydrogen ions are translocated across the cytoplasmic membrane), and thus conserves the redox energy in a proton gradient. This chain is NADH-quinone oxidoreductase subunit N, found in Sodalis glossinidius (strain morsitans).